The primary structure comprises 478 residues: Divinyl ether synthase CYP74D2 (478 aa).

Cys-431 is a heme binding site.

This sequence belongs to the cytochrome P450 family. 9-divinyl ether synthase subfamily. As to expression, expressed in roots.

It carries out the reaction (9S)-hydroperoxy-(10E,12Z)-octadecadienoate = colneleate + H2O. It catalyses the reaction (9S)-hydroperoxy-(10E,12Z,15Z)-octadecatrienoate = colnelenate + H2O. Functionally, involved in the biosynthesis of the anti-fungal and antibacterial toxins colneleate and colnelenate. Can use (9S)-hydroperoxy-(10E,12Z)-octadecadienoate (9-HPOD) and (9S)-hydroperoxy-(10E,12Z,15Z)-octadecatrienoate (9-HPOT) as substrates but has no activity with the corresponding 13-hydroperoxides (13-HPOD and 13-HPOT). In Solanum tuberosum (Potato), this protein is Divinyl ether synthase CYP74D2.